The sequence spans 69 residues: Conotoxin Eb6.22 (69 aa).

The signal sequence occupies residues 1 to 17; sequence VLIIAVLFLTACQLTTA. Residues 18–41 constitute a propeptide that is removed on maturation; the sequence is ETYSRGRQKHRARRSTDKNSKWTR. Intrachain disulfides connect Cys43/Cys57, Cys50/Cys61, and Cys56/Cys68.

Belongs to the conotoxin O1 superfamily. Expressed by the venom duct.

It is found in the secreted. This is Conotoxin Eb6.22 (E1) from Conus ebraeus (Hebrew cone).